The sequence spans 880 residues: Alanine--tRNA ligase (880 aa).

The Zn(2+) site is built by His-566, His-570, Cys-668, and His-672.

It belongs to the class-II aminoacyl-tRNA synthetase family. Zn(2+) is required as a cofactor.

The protein resides in the cytoplasm. It catalyses the reaction tRNA(Ala) + L-alanine + ATP = L-alanyl-tRNA(Ala) + AMP + diphosphate. Catalyzes the attachment of alanine to tRNA(Ala) in a two-step reaction: alanine is first activated by ATP to form Ala-AMP and then transferred to the acceptor end of tRNA(Ala). Also edits incorrectly charged Ser-tRNA(Ala) and Gly-tRNA(Ala) via its editing domain. The polypeptide is Alanine--tRNA ligase (Parafrankia sp. (strain EAN1pec)).